We begin with the raw amino-acid sequence, 184 residues long: Large ribosomal subunit protein uL10 (184 aa).

The protein belongs to the universal ribosomal protein uL10 family. In terms of assembly, part of the ribosomal stalk of the 50S ribosomal subunit. The N-terminus interacts with L11 and the large rRNA to form the base of the stalk. The C-terminus forms an elongated spine to which L12 dimers bind in a sequential fashion forming a multimeric L10(L12)X complex.

Its function is as follows. Forms part of the ribosomal stalk, playing a central role in the interaction of the ribosome with GTP-bound translation factors. The protein is Large ribosomal subunit protein uL10 of Gluconobacter oxydans (strain 621H) (Gluconobacter suboxydans).